The following is a 163-amino-acid chain: MMPGQIPDPSVTTGSLPGLGPLTGLPSSALTVEELKYADIRNLGAMIAPLHFLEVKLGKRPQPVKSELDEEEERRKRRREKNKVAAARCRNKKKERTEFLQRESERLELMNAELKTQIEELKQERQQLILMLNRHRPTCIVRTDSVKTPESEGNPLLEQLEKK.

Disordered regions lie at residues 1–20 (MMPG…PGLG) and 58–89 (GKRP…AARC). Lys65 participates in a covalent cross-link: Glycyl lysine isopeptide (Lys-Gly) (interchain with G-Cter in SUMO2). The region spanning 72-135 (EERRKRRREK…QQLILMLNRH (64 aa)) is the bZIP domain. A basic motif region spans residues 74–96 (RRKRRREKNKVAAARCRNKKKER). Residues 100–128 (LQRESERLELMNAELKTQIEELKQERQQL) are leucine-zipper. Thr148 is modified (phosphothreonine; by MAPK8).

Belongs to the bZIP family. ATF subfamily. As to quaternary structure, forms a homodimer or heterodimer with JUN, JUNB, JUND, CEBPG and ATF2 thereby inhibiting transactivation by JUN, ATF2 and CEBPG. Binds multiple DNA elements such as cAMP-response element (CRE) and TPA response element (TRE) either as homodimer or heterodimer. Interacts with IRF2BP1. In terms of processing, phosphorylation of Thr-148 by MAPK8 in response to different stress conditions such as, UV irradiation, oxidatives stress and anisomycin treatments. Polyubiquitinated; probably by IRF2BP1.

The protein localises to the nucleus. Functionally, component of the AP-1 transcription factor that represses transactivation mediated by the Jun family of proteins. Involved in a variety of transcriptional responses associated with AP-1 such as UV-induced apoptosis, cell differentiation, tumorigenesis and antitumogeneris. Can also function as a repressor by recruiting histone deacetylase 3/HDAC3 to the promoter region of JUN. May control transcription via direct regulation of the modification of histones and the assembly of chromatin. This is Jun dimerization protein 2 (JDP2) from Homo sapiens (Human).